The following is an 89-amino-acid chain: MPRSTKKGPFFDHHLIKKVESAAGSKRPIKTCSRRSVILPQMVGHTIAIHNGKNYYPVVINENMVGHKLGEFSITRVFKGHGGDKKSGK.

Belongs to the universal ribosomal protein uS19 family.

In terms of biological role, protein S19 forms a complex with S13 that binds strongly to the 16S ribosomal RNA. This Xylella fastidiosa (strain 9a5c) protein is Small ribosomal subunit protein uS19.